Reading from the N-terminus, the 28-residue chain is ADVPGNYPLDSYGNCYPCTILGDNQYCI.

One can recognise an LCN-type CS-alpha/beta domain in the interval 3–28 (VPGNYPLDSYGNCYPCTILGDNQYCI).

Belongs to the long (3 C-C) scorpion toxin superfamily. Expressed by the venom gland.

The protein localises to the secreted. Functionally, binds to sodium channels (Nav) and affects the channel activation process. This Androctonus crassicauda (Arabian fat-tailed scorpion) protein is Toxin a.